The primary structure comprises 307 residues: 3-ketodihydrosphingosine reductase TSC10 (307 aa).

Residue leucine 11 coordinates NADP(+). The NADPH site is built by glycine 14, serine 16, and glycine 18. The GXSXG motif lies at 14-18 (GGSQG). Residue leucine 19 coordinates NADP(+). NADPH contacts are provided by arginine 40, lysine 44, and leucine 74. The active-site Proton donor is the serine 147. 3 residues coordinate NADP(+): tyrosine 161, lysine 165, and serine 194. Catalysis depends on tyrosine 161, which acts as the Proton acceptor. The active-site Lowers pKa of active site Tyr is the lysine 165. A helical transmembrane segment spans residues 261 to 281 (YFLWPLGWLLGALVNLLVVPI).

It belongs to the short-chain dehydrogenases/reductases (SDR) family.

The protein resides in the endoplasmic reticulum membrane. The enzyme catalyses sphinganine + NADP(+) = 3-oxosphinganine + NADPH + H(+). It participates in lipid metabolism; sphingolipid metabolism. Catalyzes the reduction of 3'-oxosphinganine (3-ketodihydrosphingosine/KDS) to sphinganine (dihydrosphingosine/DHS), the second step of de novo sphingolipid biosynthesis. The chain is 3-ketodihydrosphingosine reductase TSC10 (TSC10) from Eremothecium gossypii (strain ATCC 10895 / CBS 109.51 / FGSC 9923 / NRRL Y-1056) (Yeast).